The chain runs to 329 residues: Fructose-1,6-bisphosphatase class 1 (329 aa).

Residues glutamate 84, aspartate 103, leucine 105, and aspartate 106 each coordinate Mg(2+). Residues 106–109 (DGSS), asparagine 196, and lysine 262 each bind substrate. A Mg(2+)-binding site is contributed by glutamate 268.

This sequence belongs to the FBPase class 1 family. Homotetramer. Mg(2+) is required as a cofactor.

The protein localises to the cytoplasm. It catalyses the reaction beta-D-fructose 1,6-bisphosphate + H2O = beta-D-fructose 6-phosphate + phosphate. Its pathway is carbohydrate biosynthesis; gluconeogenesis. The protein is Fructose-1,6-bisphosphatase class 1 of Shewanella sediminis (strain HAW-EB3).